The sequence spans 93 residues: NAD(P)H-quinone oxidoreductase subunit 4L, chloroplastic (93 aa).

2 helical membrane passes run 1–21 (MLEHALIAGAFSFCIGISGLI) and 60–80 (IFAIFVIAIAAAEAAIGLSIA).

The protein belongs to the complex I subunit 4L family. In terms of assembly, NDH is composed of at least 16 different subunits, 5 of which are encoded in the nucleus.

It is found in the plastid. The protein resides in the chloroplast thylakoid membrane. It carries out the reaction a plastoquinone + NADH + (n+1) H(+)(in) = a plastoquinol + NAD(+) + n H(+)(out). It catalyses the reaction a plastoquinone + NADPH + (n+1) H(+)(in) = a plastoquinol + NADP(+) + n H(+)(out). NDH shuttles electrons from NAD(P)H:plastoquinone, via FMN and iron-sulfur (Fe-S) centers, to quinones in the photosynthetic chain and possibly in a chloroplast respiratory chain. The immediate electron acceptor for the enzyme in this species is believed to be plastoquinone. Couples the redox reaction to proton translocation, and thus conserves the redox energy in a proton gradient. This is NAD(P)H-quinone oxidoreductase subunit 4L, chloroplastic from Anthoceros angustus (Hornwort).